The chain runs to 376 residues: Putative dihydroorotase (376 aa).

Histidine 35 and histidine 37 together coordinate Zn(2+). Substrate is bound by residues 37–39 (HVR) and asparagine 66. 3 residues coordinate Zn(2+): aspartate 114, histidine 138, and histidine 187. A substrate-binding site is contributed by asparagine 230. Aspartate 257 contacts Zn(2+). Residue aspartate 257 is part of the active site. Residues histidine 261 and 273–274 (YG) each bind substrate.

This sequence belongs to the metallo-dependent hydrolases superfamily. DHOase family. Class I DHOase subfamily. Zn(2+) is required as a cofactor.

It carries out the reaction (S)-dihydroorotate + H2O = N-carbamoyl-L-aspartate + H(+). Its pathway is pyrimidine metabolism; UMP biosynthesis via de novo pathway; (S)-dihydroorotate from bicarbonate: step 3/3. Catalyzes the reversible cyclization of carbamoyl aspartate to dihydroorotate. The sequence is that of Putative dihydroorotase (pyrC) from Thermotoga maritima (strain ATCC 43589 / DSM 3109 / JCM 10099 / NBRC 100826 / MSB8).